A 130-amino-acid chain; its full sequence is Small ribosomal subunit protein uS9 (130 aa).

It belongs to the universal ribosomal protein uS9 family.

The polypeptide is Small ribosomal subunit protein uS9 (Halorhodospira halophila (strain DSM 244 / SL1) (Ectothiorhodospira halophila (strain DSM 244 / SL1))).